Reading from the N-terminus, the 196-residue chain is Imidazoleglycerol-phosphate dehydratase (196 aa).

The protein belongs to the imidazoleglycerol-phosphate dehydratase family.

Its subcellular location is the cytoplasm. The enzyme catalyses D-erythro-1-(imidazol-4-yl)glycerol 3-phosphate = 3-(imidazol-4-yl)-2-oxopropyl phosphate + H2O. The protein operates within amino-acid biosynthesis; L-histidine biosynthesis; L-histidine from 5-phospho-alpha-D-ribose 1-diphosphate: step 6/9. This Clostridium botulinum (strain Langeland / NCTC 10281 / Type F) protein is Imidazoleglycerol-phosphate dehydratase.